Here is a 478-residue protein sequence, read N- to C-terminus: Cytochrome c-552 (478 aa).

The signal sequence occupies residues 1 to 26; that stretch reads MTRIKINARRIFSLLIPFFFFTSVHA. His-94 provides a ligand contact to heme c. Heme contacts are provided by Cys-122, Cys-125, and Lys-126. Heme c is bound by residues Cys-160, Cys-163, His-164, Cys-209, Cys-212, and His-213. The Ca(2+) site is built by Glu-215, Tyr-216, Lys-261, and Gln-263. Substrate is bound at residue Tyr-216. His-264 lines the substrate pocket. Heme c contacts are provided by His-275, Cys-282, Cys-285, His-286, His-301, Cys-314, Cys-317, His-318, and His-393.

This sequence belongs to the cytochrome c-552 family. It depends on Ca(2+) as a cofactor. Heme c is required as a cofactor.

Its subcellular location is the periplasm. It catalyses the reaction 6 Fe(III)-[cytochrome c] + NH4(+) + 2 H2O = 6 Fe(II)-[cytochrome c] + nitrite + 8 H(+). The protein operates within nitrogen metabolism; nitrate reduction (assimilation). Its function is as follows. Catalyzes the reduction of nitrite to ammonia, consuming six electrons in the process. The protein is Cytochrome c-552 of Escherichia coli O157:H7 (strain EC4115 / EHEC).